Reading from the N-terminus, the 150-residue chain is 3-dehydroquinate dehydratase (150 aa).

The active-site Proton acceptor is tyrosine 22. Substrate contacts are provided by asparagine 73, histidine 79, and aspartate 86. Catalysis depends on histidine 99, which acts as the Proton donor. Substrate-binding positions include 100-101 (LS) and arginine 110.

The protein belongs to the type-II 3-dehydroquinase family. In terms of assembly, homododecamer.

The catalysed reaction is 3-dehydroquinate = 3-dehydroshikimate + H2O. It functions in the pathway metabolic intermediate biosynthesis; chorismate biosynthesis; chorismate from D-erythrose 4-phosphate and phosphoenolpyruvate: step 3/7. In terms of biological role, catalyzes a trans-dehydration via an enolate intermediate. The sequence is that of 3-dehydroquinate dehydratase from Dinoroseobacter shibae (strain DSM 16493 / NCIMB 14021 / DFL 12).